The following is a 198-amino-acid chain: Na(+)-translocating NADH-quinone reductase subunit E (198 aa).

A run of 6 helical transmembrane segments spans residues 11–31 (AVFI…FLAV), 35–55 (VSPA…AVPV), 77–97 (FLNF…LEMV), 110–130 (GIFL…SFMV), 140–160 (IVYG…LAGL), and 176–196 (LGIT…FSGI).

It belongs to the NqrDE/RnfAE family. Composed of six subunits; NqrA, NqrB, NqrC, NqrD, NqrE and NqrF.

The protein resides in the cell inner membrane. It catalyses the reaction a ubiquinone + n Na(+)(in) + NADH + H(+) = a ubiquinol + n Na(+)(out) + NAD(+). Functionally, NQR complex catalyzes the reduction of ubiquinone-1 to ubiquinol by two successive reactions, coupled with the transport of Na(+) ions from the cytoplasm to the periplasm. NqrA to NqrE are probably involved in the second step, the conversion of ubisemiquinone to ubiquinol. This is Na(+)-translocating NADH-quinone reductase subunit E from Haemophilus influenzae (strain ATCC 51907 / DSM 11121 / KW20 / Rd).